A 296-amino-acid polypeptide reads, in one-letter code: Glycine--tRNA ligase alpha subunit (296 aa).

It belongs to the class-II aminoacyl-tRNA synthetase family. Tetramer of two alpha and two beta subunits.

Its subcellular location is the cytoplasm. The catalysed reaction is tRNA(Gly) + glycine + ATP = glycyl-tRNA(Gly) + AMP + diphosphate. The polypeptide is Glycine--tRNA ligase alpha subunit (Listeria monocytogenes serotype 4a (strain HCC23)).